The chain runs to 399 residues: Bombesin receptor subtype-3 (399 aa).

A compositionally biased stretch (polar residues) spans 1–31 (MSQRQPQSPNQTLISTTNDTESSSSVVPNDS). Residues 1–38 (MSQRQPQSPNQTLISTTNDTESSSSVVPNDSTNKRRTG) form a disordered region. The Extracellular portion of the chain corresponds to 1–41 (MSQRQPQSPNQTLISTTNDTESSSSVVPNDSTNKRRTGDNS). N10, N18, and N29 each carry an N-linked (GlcNAc...) asparagine glycan. A helical transmembrane segment spans residues 42-63 (PGIEALCAIYITYAVIISVGIL). Over 64–82 (GNAILIKVFFKTKSMQTVP) the chain is Cytoplasmic. The chain crosses the membrane as a helical span at residues 83–103 (NIFITSLAFGDLLLLLTCVPV). The Extracellular segment spans residues 104–121 (DVTHYLAEGWLFGRIGCK). C120 and C203 form a disulfide bridge. A helical transmembrane segment spans residues 122-143 (VLSFIRLTSVGVSVFTLTILSA). Topologically, residues 144–163 (DRYKAVVKPLERQPPNAILK) are cytoplasmic. A helical membrane pass occupies residues 164–184 (TCAKAGCIWIMSMIIALPEAI). Topologically, residues 185 to 220 (FSNVYTFQDPDKNVTFKACASYPVSERLLQEIHSLL) are extracellular. The helical transmembrane segment at 221 to 241 (CFLVFYIIPLSIISVYYSLIA) threads the bilayer. Residues 242-272 (RTLYKSTLNIPTEEQRHARKQIESRKRIAKT) lie on the Cytoplasmic side of the membrane. A helical transmembrane segment spans residues 273 to 293 (VLVLVALFALCWLPNHLLYLY). Residues 294–313 (RSFTSQTYMDSSTVHLFVTI) lie on the Extracellular side of the membrane. Residues 314–333 (ISRILAFSNSCVNPFALYWL) traverse the membrane as a helical segment. The Cytoplasmic segment spans residues 334 to 399 (SNTFQQHFKA…CSVKKEDDRV (66 aa)).

It belongs to the G-protein coupled receptor 1 family. Interacts with C6orf89.

The protein resides in the cell membrane. Functionally, role in sperm cell division, maturation, or function. This receptor mediates its action by association with G proteins that activate a phosphatidylinositol-calcium second messenger system. The chain is Bombesin receptor subtype-3 (BRS3) from Ovis aries (Sheep).